Consider the following 873-residue polypeptide: Putative receptor-like protein kinase At5g39000 (873 aa).

Positions 1-21 (MIRHALLIFSILVSTPIVGEG) are cleaved as a signal peptide. Over 22 to 445 (ATSTYEPTDV…KNKSHILPIT (424 aa)) the chain is Extracellular. N-linked (GlcNAc...) asparagine glycans are attached at residues Asn49, Asn64, Asn138, Asn168, Asn216, Asn266, Asn300, Asn340, and Asn437. A helical membrane pass occupies residues 446-466 (LAVVGSLVVLAMFVVGVLVIM). Residues 467–873 (KKKKKSKPST…FSEINEPKAR (407 aa)) lie on the Cytoplasmic side of the membrane. The segment at 472–494 (SKPSTNSSWCPLPHGTDSTNTKP) is disordered. Residues 518-803 (FEDKLIIGVG…EFALQLHETA (286 aa)) form the Protein kinase domain. Residues 524-532 (IGVGGFGSV) and Lys547 contribute to the ATP site. The active-site Proton acceptor is Asp646. The disordered stretch occupies residues 813–843 (LDLMPSGEVGTTTDGEDDLFSRTTGHVGKST). A compositionally biased stretch (polar residues) spans 833–843 (SRTTGHVGKST).

This sequence belongs to the protein kinase superfamily. Ser/Thr protein kinase family.

The protein localises to the membrane. The sequence is that of Putative receptor-like protein kinase At5g39000 from Arabidopsis thaliana (Mouse-ear cress).